The chain runs to 579 residues: Mitogen-activated protein kinase kinase kinase 7 (579 aa).

The interval 1-300 is interaction with MAPK8IP1; that stretch reads MSTASAASSS…FPGADEPLQY (300 aa). In terms of domain architecture, Protein kinase spans 36–291; sequence IEVEEVVGRG…KIMTHLMRYF (256 aa). Residues 42-50 and lysine 63 each bind ATP; that span reads VGRGAFGVV. A Glycyl lysine isopeptide (Lys-Gly) (interchain with G-Cter in ubiquitin) cross-link involves residue lysine 72. Catalysis depends on aspartate 156, which acts as the Proton acceptor. Lysine 158 is covalently cross-linked (Glycyl lysine isopeptide (Lys-Gly) (interchain with G-Cter in ubiquitin)). Phosphothreonine; by autocatalysis occurs at positions 184 and 187. Serine 192 carries the post-translational modification Phosphoserine; by autocatalysis. A Glycyl lysine isopeptide (Lys-Gly) (interchain with G-Cter in ubiquitin) cross-link involves residue lysine 209. 2 disordered regions span residues 301–338 and 354–391; these read PCQY…MEQV and KNQA…MSAD. Residues 306-338 show a composition bias toward polar residues; that stretch reads DEGQSNSATSTGSFMDIASTNTSNKSDTNMEQV. Over residues 361 to 375 the composition is skewed to low complexity; sequence SESGRLSLGASRGSS. A phosphoserine mark is found at serine 367, serine 389, and serine 412. Polar residues predominate over residues 416-425; the sequence is LTVTGTEPGQ. A disordered region spans residues 416–466; that stretch reads LTVTGTEPGQVSSRSSSPSVRMITTSGPTSEKPARSHPWTPDDSTDTNGSD. Residues 426–436 are compositionally biased toward low complexity; that stretch reads VSSRSSSPSVR. Phosphoserine is present on serine 428.

It belongs to the protein kinase superfamily. STE Ser/Thr protein kinase family. MAP kinase kinase kinase subfamily. As to quaternary structure, can form homodimer. Binds both upstream activators and downstream substrates in multimolecular complexes. Interacts with TAB1/MAP3K7IP1, TAB2/MAP3K7IP2 and TAB3/MAP3K7IP3. Identified in the TRIKA2 complex composed of MAP3K7/TAK1, TAB1/MAP3K7IP1 and TAB2/MAP3K7IP2. Interacts with PPM1L and PPM1B/PP2CB. Interaction with PP2A and PPP6C leads to its repressed activity. Interacts with TRAF6 and TAB1/MAP3K7IP1; during IL-1 signaling. Interacts with TAOK1 and TAOK2; interaction with TAOK2 interferes with MAP3K7 interaction with IKKA, thus preventing NF-kappa-B activation. Interacts with DYNC2I2 (via WD domains). Interacts with CYLD and RBCK1. Interacts with TGFBR1; induces MAP3K7/TAK1 activation by TRAF6. Interacts with MAPK8IP1 and SMAD6. Interacts with isoform 1 of VRK2. Interacts with DAB2; the interaction is induced by TGF-beta stimulation and may mediate TGF-beta stimulated JNK activation. Interacts with TRIM5. Part of a complex containing ITCH, NDFIP1 and MAP3K7. Interacts with PLEKHM1 (via N- and C-terminus). Interacts with TRIM8. Found in a complex with SH3RF1, RAC2, MAP2K7/MKK7, MAPK8IP1/JIP1, MAPK8/JNK1 and MAPK9/JNK2. Interacts with SASH1. Interacts with RIPK1. The cofactor is Mg(2+). Association with TAB1/MAP3K7IP1 promotes autophosphorylation and subsequent activation. Association with TAB2/MAP3K7IP2, itself associated with free unanchored Lys-63 polyubiquitin chain, promotes autophosphorylation and subsequent activation of MAP3K7. Dephosphorylation at Thr-187 by PP2A and PPP6C leads to inactivation. Post-translationally, 'Lys-48'-linked polyubiquitination at Lys-72 is induced by TNFalpha, and leads to proteasomal degradation. Undergoes 'Lys-48'-linked polyubiquitination catalyzed by ITCH. 'Lys-63'-linked polyubiquitination at Lys-158 by TRIM8 does not lead to proteasomal degradation but contributes to autophosphorylation and activation. Deubiquitinated by CYLD, a protease that selectively cleaves 'Lys-63'-linked ubiquitin chains.Deubiquitinated by USP19; leading to negative regulation of TNF-alpha- and IL-1beta-triggered NF-kappa-B activation.

The protein localises to the cytoplasm. Its subcellular location is the cell membrane. The enzyme catalyses L-seryl-[protein] + ATP = O-phospho-L-seryl-[protein] + ADP + H(+). The catalysed reaction is L-threonyl-[protein] + ATP = O-phospho-L-threonyl-[protein] + ADP + H(+). Activated by pro-inflammatory cytokines and in response to physical and chemical stresses, including osmotic stress, oxidative stress, arsenic and ultraviolet light irradiation. Activated by 'Lys-63'-linked polyubiquitination and by autophosphorylation. Association with TAB1/MAP3K7IP1 and TAB2/MAP3K7IP2 promotes activation through autophosphorylation, whereas PPM1B/PP2CB, PP2A and PPP6C dephosphorylation leads to inactivation. Ceramides are also able to activate MAP3K7/TAK1. Its function is as follows. Serine/threonine kinase which acts as an essential component of the MAP kinase signal transduction pathway. Plays an important role in the cascades of cellular responses evoked by changes in the environment. Mediates signal transduction of TRAF6, various cytokines including interleukin-1 (IL-1), transforming growth factor-beta (TGFB), TGFB-related factors like BMP2 and BMP4, toll-like receptors (TLR), tumor necrosis factor receptor CD40 and B-cell receptor (BCR). Once activated, acts as an upstream activator of the MKK/JNK signal transduction cascade and the p38 MAPK signal transduction cascade through the phosphorylation and activation of several MAP kinase kinases like MAP2K1/MEK1, MAP2K3/MKK3, MAP2K6/MKK6 and MAP2K7/MKK7. These MAP2Ks in turn activate p38 MAPKs and c-jun N-terminal kinases (JNKs); both p38 MAPK and JNK pathways control the transcription factors activator protein-1 (AP-1). Independently of MAP2Ks and p38 MAPKs, acts as a key activator of NF-kappa-B by promoting activation of the I-kappa-B-kinase (IKK) core complex. Mechanistically, recruited to polyubiquitin chains of RIPK2 and IKBKG/NEMO via TAB2/MAP3K7IP2 and TAB3/MAP3K7IP3, and catalyzes phosphorylation and activation of IKBKB/IKKB component of the IKK complex, leading to NF-kappa-B activation. In osmotic stress signaling, plays a major role in the activation of MAPK8/JNK1, but not that of NF-kappa-B. Promotes TRIM5 capsid-specific restriction activity. Phosphorylates RIPK1 at 'Ser-321' which positively regulates RIPK1 interaction with RIPK3 to promote necroptosis but negatively regulates RIPK1 kinase activity and its interaction with FADD to mediate apoptosis. Phosphorylates STING1 in response to cGAMP-activation, promoting association between STEEP1 and STING1 and STING1 translocation to COPII vesicles. The protein is Mitogen-activated protein kinase kinase kinase 7 (Map3k7) of Mus musculus (Mouse).